Reading from the N-terminus, the 684-residue chain is MNNIFAYKEIESPIDDQICKDYKTKYANPSIPIIIDNGSYQCRAGFANDISPKLIFRSLVGKVKSTSSPIVGNSLKEGDISRLTIKSPFDSNLLVHPPSQESIFDYIFHKFGIENEIENPVLITEPTSNPTFCRKYMSELLFECYNIKSVVYGIDSLFSFYGQRDQFKDGGKNSLIIGSSFNTTHIYNVQNYNVSHQQTKRINIGGGASTDYLRKLIHLKYPKHKSYFTQNYTNKIKEEHCYVSQGQYIEELKEFENDQLAKEKSVIIQLPYQEIDFEKLEEERQRKIQNRKDLGAKLRELADKKRLEKKTELEDKLASLESILALKTTNVEEFQQTLKSKSYATEKDLIRDIDDLKDKLFGKKKESEQVEDTEEFPLLFIADSELNADQLKEKKKQRQLKSMKDGRLAQKRKRDEEKEKEKEKEEERDRQEEESFLKDPEHYLKDLHSRKSKILEKREARQKQKQKANIVQRNSRLRTIVNPTNHGNYGEKGEEVEDPEEAEESREMAILDKLLNKFDPTSISSAIVSHDDQFPIGEYHTAEDFQVSLGVERIKCPETLFQPKAIIGVDQMGLVEAIISSILSQLPVDTRKLVTENIFLTGGNVNTKHFKDRIHYEIQQIREPYSPLTILKSKDSQLDAWLGARKWCLDNQDNWSNVSISKQDYQEKGYDYIKSHFASNLSLN.

Positions 262-469 (KEKSVIIQLP…ARQKQKQKAN (208 aa)) form a coiled coil. Disordered regions lie at residues 392–443 (KEKK…PEHY) and 481–500 (VNPT…EDPE). Residues 402–443 (SMKDGRLAQKRKRDEEKEKEKEKEEERDRQEEESFLKDPEHY) show a composition bias toward basic and acidic residues.

Belongs to the actin family. ARP5 subfamily. As to quaternary structure, component of the chromatin-remodeling Ino80 complex.

It is found in the nucleus. Functionally, proposed core component of the chromatin remodeling Ino80 complex which is involved in transcriptional regulation, DNA replication and probably DNA repair. This is Actin-related protein 5 (arpE) from Dictyostelium discoideum (Social amoeba).